A 236-amino-acid polypeptide reads, in one-letter code: 2,3,4,5-tetrahydropyridine-2,6-dicarboxylate N-acetyltransferase (236 aa).

The protein belongs to the transferase hexapeptide repeat family. DapH subfamily.

The enzyme catalyses (S)-2,3,4,5-tetrahydrodipicolinate + acetyl-CoA + H2O = L-2-acetamido-6-oxoheptanedioate + CoA. It participates in amino-acid biosynthesis; L-lysine biosynthesis via DAP pathway; LL-2,6-diaminopimelate from (S)-tetrahydrodipicolinate (acetylase route): step 1/3. Catalyzes the transfer of an acetyl group from acetyl-CoA to tetrahydrodipicolinate. The polypeptide is 2,3,4,5-tetrahydropyridine-2,6-dicarboxylate N-acetyltransferase (Lactobacillus helveticus (strain DPC 4571)).